The sequence spans 420 residues: O-methyltransferase opaF (420 aa).

Residues 262 to 263, Asp-287, and 308 to 309 contribute to the S-adenosyl-L-methionine site; these read GG and DL. Residue His-328 is the Proton acceptor of the active site.

The protein belongs to the class I-like SAM-binding methyltransferase superfamily. Cation-independent O-methyltransferase family.

Its pathway is secondary metabolite biosynthesis. Functionally, O-methyltransferase; part of the gene cluster that mediates the biosynthesis of oxepinamides, derivatives of anthranilyl-containing tripeptides that share an oxepin ring and a fused pyrimidinone moiety. The nonribosomal peptide synthetase (NRPS) opaA assembles the quinazolinone core with D-Phe incorporation. The first adenylation domain (A1) of opaA loads and activates anthranilic acid whereas the second A domain (A2) is for activating of L-Phe, which is then converted to D-form by the E domain. The third A domain (A3) is responsible for L-Ile activation and the terminal condensation domain C3 for cyclization and releasing the NRPS product protuboxepin K. The cytochrome P450 monooxygenase opaB then catalyzes alone the oxepin ring formation to convert protuboxepin K into protuboxepin A. The flavoenzyme opaC installs subsequently one hydroxyl group at the oxepin ring, accompanied by double bond migration, to form 15-epi-oxepinamide E. The epimerase opaE changes the D-Phe residue back to L-form, leading to oxepinamide E, which is further methylated at the hydroxyl group at C-12 by the O-methyltransferase OpaF to yield oxepinamide F. This is O-methyltransferase opaF from Aspergillus ustus.